The primary structure comprises 216 residues: Nicotinamidase (216 aa).

Asp8 is a catalytic residue. Zn(2+) is bound by residues Asp51, His53, and His94. Lys122 is a catalytic residue. Cys167 acts as the Nucleophile in catalysis.

Belongs to the isochorismatase family.

Its subcellular location is the cytoplasm. It localises to the nucleus. The protein resides in the peroxisome. The enzyme catalyses nicotinamide + H2O = nicotinate + NH4(+). The protein operates within cofactor biosynthesis; nicotinate biosynthesis; nicotinate from nicotinamide: step 1/1. Its activity is regulated as follows. Inhibited by N-ethylmaleimide, HgCl(2) and PCMB. Competitively inhibited by NAD, NMN and 3-acetylpyridine. Its function is as follows. Catalyzes the deamidation of nicotinamide, an early step in the NAD(+) salvage pathway. Positively regulates SIR2-mediated silencing and longevity by preventing the accumulation of intracellular nicotinamide, an inhibitor of SIR2, during times of stress. Also acts on nicotinyl hydroxamate. The protein is Nicotinamidase (PNC1) of Saccharomyces cerevisiae (strain ATCC 204508 / S288c) (Baker's yeast).